The sequence spans 590 residues: UvrABC system protein C (590 aa).

Residues 14–91 (DQPGCYLMKD…IKKYDPKYNV (78 aa)) form the GIY-YIG domain. One can recognise a UVR domain in the interval 196–231 (NEIKKELEAKMAEAAEKLEFERAKEFRDQLAHIEST).

This sequence belongs to the UvrC family. In terms of assembly, interacts with UvrB in an incision complex.

The protein localises to the cytoplasm. The UvrABC repair system catalyzes the recognition and processing of DNA lesions. UvrC both incises the 5' and 3' sides of the lesion. The N-terminal half is responsible for the 3' incision and the C-terminal half is responsible for the 5' incision. This Bacillus velezensis (strain DSM 23117 / BGSC 10A6 / LMG 26770 / FZB42) (Bacillus amyloliquefaciens subsp. plantarum) protein is UvrABC system protein C.